Here is a 436-residue protein sequence, read N- to C-terminus: Methylenetetrahydrofolate--tRNA-(uracil-5-)-methyltransferase TrmFO (436 aa).

8-13 provides a ligand contact to FAD; sequence GGGLAG.

It belongs to the MnmG family. TrmFO subfamily. FAD is required as a cofactor.

It is found in the cytoplasm. It carries out the reaction uridine(54) in tRNA + (6R)-5,10-methylene-5,6,7,8-tetrahydrofolate + NADH + H(+) = 5-methyluridine(54) in tRNA + (6S)-5,6,7,8-tetrahydrofolate + NAD(+). The enzyme catalyses uridine(54) in tRNA + (6R)-5,10-methylene-5,6,7,8-tetrahydrofolate + NADPH + H(+) = 5-methyluridine(54) in tRNA + (6S)-5,6,7,8-tetrahydrofolate + NADP(+). Its function is as follows. Catalyzes the folate-dependent formation of 5-methyl-uridine at position 54 (M-5-U54) in all tRNAs. The polypeptide is Methylenetetrahydrofolate--tRNA-(uracil-5-)-methyltransferase TrmFO (Syntrophomonas wolfei subsp. wolfei (strain DSM 2245B / Goettingen)).